The chain runs to 83 residues: Small ribosomal subunit protein uS17 (83 aa).

Belongs to the universal ribosomal protein uS17 family. In terms of assembly, part of the 30S ribosomal subunit.

In terms of biological role, one of the primary rRNA binding proteins, it binds specifically to the 5'-end of 16S ribosomal RNA. The chain is Small ribosomal subunit protein uS17 from Aliarcobacter butzleri (strain RM4018) (Arcobacter butzleri).